The following is a 353-amino-acid chain: Anthranilate phosphoribosyltransferase (353 aa).

Residues Gly86, 89 to 90, 96 to 99, 114 to 122, and Ser126 contribute to the 5-phospho-alpha-D-ribose 1-diphosphate site; these read GD, NVST, and KHGNRAVSG. An anthranilate-binding site is contributed by Gly86. Residue Ser98 coordinates Mg(2+). Residue Asn117 coordinates anthranilate. Residue Arg172 coordinates anthranilate. Residues Asp231 and Glu232 each contribute to the Mg(2+) site.

It belongs to the anthranilate phosphoribosyltransferase family. Homodimer. It depends on Mg(2+) as a cofactor.

The enzyme catalyses N-(5-phospho-beta-D-ribosyl)anthranilate + diphosphate = 5-phospho-alpha-D-ribose 1-diphosphate + anthranilate. The protein operates within amino-acid biosynthesis; L-tryptophan biosynthesis; L-tryptophan from chorismate: step 2/5. In terms of biological role, catalyzes the transfer of the phosphoribosyl group of 5-phosphorylribose-1-pyrophosphate (PRPP) to anthranilate to yield N-(5'-phosphoribosyl)-anthranilate (PRA). The protein is Anthranilate phosphoribosyltransferase of Pseudomonas syringae pv. syringae (strain B728a).